The sequence spans 89 residues: Shiga toxin subunit B (89 aa).

Residues 1 to 20 form the signal peptide; that stretch reads MKKTLLIAASLSFFSASALA. Cys-24 and Cys-77 are joined by a disulfide.

Belongs to the stxB family. As to quaternary structure, shiga toxin contains a single subunit A and five copies of subunit B.

The B subunit is responsible for the binding of the holotoxin to specific receptors on the target cell surface, such as globotriaosylceramide (Gb3) in human intestinal microvilli. The polypeptide is Shiga toxin subunit B (stxB) (Shigella sonnei (Shigella sonnei bacteriophage 7888)).